A 286-amino-acid polypeptide reads, in one-letter code: 3-hydroxyanthranilate 3,4-dioxygenase (286 aa).

The interval 1–160 is domain A (catalytic); the sequence is MERRVRVKSW…SEQYRTGKPN (160 aa). R43 is an O2 binding site. 3 residues coordinate Fe cation: H47, E53, and H91. Position 53 (E53) interacts with substrate. R95 and E105 together coordinate substrate. The linker stretch occupies residues 161 to 177; that stretch reads PDQLLKELPFPLNTRSI. Residues 178–286 form a domain B region; it reads MKPMSLKAWL…QDPARKKPWW (109 aa).

This sequence belongs to the 3-HAO family. In terms of assembly, monomer. Fe(2+) is required as a cofactor.

It is found in the cytoplasm. The protein localises to the cytosol. It carries out the reaction 3-hydroxyanthranilate + O2 = (2Z,4Z)-2-amino-3-carboxymuconate 6-semialdehyde. It participates in cofactor biosynthesis; NAD(+) biosynthesis; quinolinate from L-kynurenine: step 3/3. Functionally, catalyzes the oxidative ring opening of 3-hydroxyanthranilate to 2-amino-3-carboxymuconate semialdehyde, which spontaneously cyclizes to quinolinate. The chain is 3-hydroxyanthranilate 3,4-dioxygenase (Haao) from Mus musculus (Mouse).